The sequence spans 533 residues: Glucomannan 4-beta-mannosyltransferase 9 (533 aa).

The chain crosses the membrane as a helical span at residues 37–57 (IVPALRLGVYICLTMSVMLFV). Residue Asp136 is part of the active site. Residues Asp195 and Asp197 each coordinate substrate. Asp289 is an active-site residue. 4 helical membrane passes run 368–388 (LVAHIVTFIFYCVILPATVLV), 404–426 (VITLLNAVGTPRSLHLMVFWILF), 483–503 (VLELGVGMYLLFVGCYDAFFG), and 510–530 (YLFAQAIAFFIAGFGQIGTIV).

This sequence belongs to the glycosyltransferase 2 family. Plant cellulose synthase-like A subfamily. In terms of tissue distribution, expressed in cotyledons at the base of the hypocotyls, in root elongation zone, lateral root primordia, vascular system of young leaves, abscission zone of the pedicle,.

Its subcellular location is the golgi apparatus membrane. The catalysed reaction is GDP-mannose + (glucomannan)n = GDP + (glucomannan)n+1.. In terms of biological role, possesses glucomannan synthase and mannan synthase activities in vitro. Mannan synthase consists of a 4-beta-mannosyltransferase activity on mannan using GDP-mannose. The beta-1,4-mannan product is the backbone for galactomannan synthesis by galactomannan galactosyltransferase. Galactomannan is a noncellulosic polysaccharides of plant cell wall. Required for lateral root development. In Arabidopsis thaliana (Mouse-ear cress), this protein is Glucomannan 4-beta-mannosyltransferase 9.